Consider the following 40-residue polypeptide: Thioredoxin (40 aa).

A disulfide bridge connects residues cysteine 29 and cysteine 32.

This sequence belongs to the thioredoxin family.

Its function is as follows. Participates in various redox reactions through the reversible oxidation of its active center dithiol to a disulfide and catalyzes dithiol-disulfide exchange reactions. The sequence is that of Thioredoxin (trxA) from Clostridium sporogenes.